The chain runs to 544 residues: Chaperonin GroEL 1 (544 aa).

Residues 29-32 (TLGP), 86-90 (DGTTT), Gly-413, 479-481 (NAA), and Asp-495 each bind ATP. A disordered region spans residues 525 to 544 (PEPKDNAPAGAGAGGGDFDY). The segment covering 535–544 (AGAGGGDFDY) has biased composition (gly residues).

This sequence belongs to the chaperonin (HSP60) family. In terms of assembly, forms a cylinder of 14 subunits composed of two heptameric rings stacked back-to-back. Interacts with the co-chaperonin GroES.

Its subcellular location is the cytoplasm. It carries out the reaction ATP + H2O + a folded polypeptide = ADP + phosphate + an unfolded polypeptide.. Functionally, together with its co-chaperonin GroES, plays an essential role in assisting protein folding. The GroEL-GroES system forms a nano-cage that allows encapsulation of the non-native substrate proteins and provides a physical environment optimized to promote and accelerate protein folding. This Nostoc sp. (strain PCC 7120 / SAG 25.82 / UTEX 2576) protein is Chaperonin GroEL 1.